A 413-amino-acid chain; its full sequence is Replication factor C large subunit (413 aa).

Residue 54-61 (GPPGSGKT) participates in ATP binding.

This sequence belongs to the activator 1 small subunits family. RfcL subfamily. In terms of assembly, heteromultimer composed of small subunits (RfcS) and large subunits (RfcL).

Its function is as follows. Part of the RFC clamp loader complex which loads the PCNA sliding clamp onto DNA. This Thermofilum pendens (strain DSM 2475 / Hrk 5) protein is Replication factor C large subunit.